The sequence spans 3206 residues: Highly reducing polyketide synthase ltbA (3206 aa).

The Ketosynthase family 3 (KS3) domain occupies 5 to 434 (PAPIAIIGVG…GTNCHVILEA (430 aa)). Active-site for beta-ketoacyl synthase activity residues include cysteine 179, histidine 314, and histidine 354. Over residues 441–463 (PTGTNGIKTNGTRINGIKTNGAD) the composition is skewed to polar residues. The disordered stretch occupies residues 441–472 (PTGTNGIKTNGTRINGIKTNGADTNERESMKN). The tract at residues 575–890 (VFSGQGAQWH…EYLSALQRNT (316 aa)) is malonyl-CoA:ACP transacylase (MAT) domain. Positions 958–1098 (HDLLGLFDPA…GEITVEYETD (141 aa)) are N-terminal hotdog fold. The dehydratase (DH) domain stretch occupies residues 958–1278 (HDLLGLFDPA…LLVNLRAIGE (321 aa)). The PKS/mFAS DH domain occupies 958-1284 (HDLLGLFDPA…AIGETREDED (327 aa)). Histidine 990 functions as the Proton acceptor; for dehydratase activity in the catalytic mechanism. The C-terminal hotdog fold stretch occupies residues 1128–1284 (DTDMTKSEFY…AIGETREDED (157 aa)). Aspartate 1193 acts as the Proton donor; for dehydratase activity in catalysis. Positions 1450 to 1640 (ESGILVGPYE…LARNGFGGIH (191 aa)) are methyltransferase (CMet) domain. The tract at residues 1871-2185 (LLSSLRFVDD…RKHTGKVVLQ (315 aa)) is enoyl reductase (ER) domain. A ketoreductase (KR) domain region spans residues 2208–2395 (GTYVAAGGLG…SVDAHGALKE (188 aa)). The 79-residue stretch at 2499–2577 (EEAEQLIRDA…ALAATVASRS (79 aa)) folds into the Carrier domain. Serine 2537 carries the post-translational modification O-(pantetheine 4'-phosphoryl)serine. The segment at 2584 to 2611 (IRHSSRLQEATTQAENKDAPKNEKEGPS) is disordered. Residues 2598-2610 (ENKDAPKNEKEGP) are compositionally biased toward basic and acidic residues. The carnitine O-acyltransferase (cAT) domain stretch occupies residues 2994–3206 (HLIPSFGKAV…IKTIIQAGQE (213 aa)).

Pantetheine 4'-phosphate serves as cofactor.

Its pathway is secondary metabolite biosynthesis. Highly reducing polyketide synthase; part of the gene cluster that mediates the biosynthesis of luteodienoside A, a glycosylated polyketide consisting of an unusual 1-O-beta-D-glucopyranosyl-myo-inositol (glucinol) ester of 3-hydroxy-2,2,4-trimethylocta-4,6-dienoic acid. LtbA produces the trimethylated polyketide chain from acetyl-CoA, malonyl-CoA and S-adenosylmethionine (SAM). The ltbA carnitine O-acyltransferase (cAT) domain then uses glucinol produced by the glycosyltransferase ltbB as an offloading substrate to release luteodienoside A. Furthermore, the PKS C-methyltransferase (CMeT) domain is capable of catalysing gem-dimethylation of the 3-hydroxy-2,2,4-trimethylocta-4,6-dienoic acid intermediate, without requiring reversible product release and recapture by the cAT domain. Since ltbA and ltbB are sufficient for the biosynthesis of luteodienoside A, the functions of the methyltransferase ltbC and the FAD-binding monooxygenase ltbD within the pathway remain obscur. The protein is Highly reducing polyketide synthase ltbA of Aspergillus luteorubrus.